Consider the following 342-residue polypeptide: L-threonine 3-dehydrogenase (342 aa).

C38 contributes to the Zn(2+) binding site. Residues T40 and H43 each act as charge relay system in the active site. Positions 63, 64, 93, 96, 99, and 107 each coordinate Zn(2+). NAD(+) is bound by residues I175, D195, R200, 262–264, and 286–287; these read LGI and IY.

Belongs to the zinc-containing alcohol dehydrogenase family. As to quaternary structure, homotetramer. Zn(2+) is required as a cofactor.

It localises to the cytoplasm. It carries out the reaction L-threonine + NAD(+) = (2S)-2-amino-3-oxobutanoate + NADH + H(+). It functions in the pathway amino-acid degradation; L-threonine degradation via oxydo-reductase pathway; glycine from L-threonine: step 1/2. Its function is as follows. Catalyzes the NAD(+)-dependent oxidation of L-threonine to 2-amino-3-ketobutyrate. This chain is L-threonine 3-dehydrogenase, found in Aeromonas salmonicida (strain A449).